The sequence spans 729 residues: Fatty acid oxidation complex subunit alpha (729 aa).

Residues Met1–Ala189 are enoyl-CoA hydratase/isomerase. Position 296 (Asp296) interacts with substrate. The segment at Pro311–Ala729 is 3-hydroxyacyl-CoA dehydrogenase. NAD(+) contacts are provided by residues Met324, Asp343, Val400 to Glu402, Lys407, and Ser429. The For 3-hydroxyacyl-CoA dehydrogenase activity role is filled by His450. Asn453 contacts NAD(+). Residues Asn500 and Tyr660 each coordinate substrate.

This sequence in the N-terminal section; belongs to the enoyl-CoA hydratase/isomerase family. It in the C-terminal section; belongs to the 3-hydroxyacyl-CoA dehydrogenase family. Heterotetramer of two alpha chains (FadB) and two beta chains (FadA).

The enzyme catalyses a (3S)-3-hydroxyacyl-CoA + NAD(+) = a 3-oxoacyl-CoA + NADH + H(+). It carries out the reaction a (3S)-3-hydroxyacyl-CoA = a (2E)-enoyl-CoA + H2O. It catalyses the reaction a 4-saturated-(3S)-3-hydroxyacyl-CoA = a (3E)-enoyl-CoA + H2O. The catalysed reaction is (3S)-3-hydroxybutanoyl-CoA = (3R)-3-hydroxybutanoyl-CoA. The enzyme catalyses a (3Z)-enoyl-CoA = a 4-saturated (2E)-enoyl-CoA. It carries out the reaction a (3E)-enoyl-CoA = a 4-saturated (2E)-enoyl-CoA. It participates in lipid metabolism; fatty acid beta-oxidation. Its function is as follows. Involved in the aerobic and anaerobic degradation of long-chain fatty acids via beta-oxidation cycle. Catalyzes the formation of 3-oxoacyl-CoA from enoyl-CoA via L-3-hydroxyacyl-CoA. It can also use D-3-hydroxyacyl-CoA and cis-3-enoyl-CoA as substrate. The sequence is that of Fatty acid oxidation complex subunit alpha from Pectobacterium atrosepticum (strain SCRI 1043 / ATCC BAA-672) (Erwinia carotovora subsp. atroseptica).